Here is a 221-residue protein sequence, read N- to C-terminus: Protein GrpE 1 (221 aa).

Disordered regions lie at residues 1 to 44 (MTEE…AAAQ) and 192 to 221 (VAEPQPGAQTVKADEAEAADDKESGGPEEG). The segment covering 26-44 (KAAPSEGAAPAGDAAAAAQ) has biased composition (low complexity). Positions 203–221 (KADEAEAADDKESGGPEEG) are enriched in basic and acidic residues.

The protein belongs to the GrpE family. Homodimer.

Its subcellular location is the cytoplasm. Functionally, participates actively in the response to hyperosmotic and heat shock by preventing the aggregation of stress-denatured proteins, in association with DnaK and GrpE. It is the nucleotide exchange factor for DnaK and may function as a thermosensor. Unfolded proteins bind initially to DnaJ; upon interaction with the DnaJ-bound protein, DnaK hydrolyzes its bound ATP, resulting in the formation of a stable complex. GrpE releases ADP from DnaK; ATP binding to DnaK triggers the release of the substrate protein, thus completing the reaction cycle. Several rounds of ATP-dependent interactions between DnaJ, DnaK and GrpE are required for fully efficient folding. This Streptomyces avermitilis (strain ATCC 31267 / DSM 46492 / JCM 5070 / NBRC 14893 / NCIMB 12804 / NRRL 8165 / MA-4680) protein is Protein GrpE 1.